The primary structure comprises 145 residues: Basic phospholipase A2 cPt10 (145 aa).

An N-terminal signal peptide occupies residues 1-21 (MYPAHLLVLLAVCVSLLGASA). Residues 22–27 (IPPLPL) constitute a propeptide that is removed on maturation. 7 disulfide bridges follow: Cys38-Cys98, Cys54-Cys144, Cys56-Cys72, Cys71-Cys125, Cys78-Cys118, Cys87-Cys111, and Cys105-Cys116. Ca(2+) is bound by residues Tyr55, Gly57, and Gly59. The active site involves His75. Asp76 contributes to the Ca(2+) binding site. The active site involves Asp119.

It belongs to the phospholipase A2 family. Group I subfamily. D49 sub-subfamily. The cofactor is Ca(2+). In terms of tissue distribution, expressed by the venom gland.

The protein localises to the secreted. It carries out the reaction a 1,2-diacyl-sn-glycero-3-phosphocholine + H2O = a 1-acyl-sn-glycero-3-phosphocholine + a fatty acid + H(+). In terms of biological role, PLA2 catalyzes the calcium-dependent hydrolysis of the 2-acyl groups in 3-sn-phosphoglycerides. The sequence is that of Basic phospholipase A2 cPt10 from Laticauda semifasciata (Black-banded sea krait).